A 225-amino-acid polypeptide reads, in one-letter code: MDKRISIAIDGPAAAGKSTVAKVVAKKLSYVYIDTGAMYRTITYAALEQKVDIENEEQLMEVVKNVKIEFQQGENTQLVFLNGQDVSEVIRTPEVTNRVSIVAKHRLVREEMVRRQQELAEKGGVVMDGRDIGTHVLPDAEVKIFMLASVEERAERRHLENMNKGFDSNLEQLKEEIAQRDKLDSEREVSPLKKADDALELDTTSLSIEEVVQKIMSIVSGVFAK.

11-19 (GPAAAGKST) serves as a coordination point for ATP.

Belongs to the cytidylate kinase family. Type 1 subfamily.

The protein resides in the cytoplasm. It catalyses the reaction CMP + ATP = CDP + ADP. The enzyme catalyses dCMP + ATP = dCDP + ADP. This Bacillus cereus (strain ATCC 10987 / NRS 248) protein is Cytidylate kinase.